The primary structure comprises 362 residues: Phosphoserine aminotransferase (362 aa).

Residues serine 9 and arginine 42 each coordinate L-glutamate. Residues 76–77 (GR), tryptophan 102, threonine 153, aspartate 174, and glutamine 197 each bind pyridoxal 5'-phosphate. At lysine 198 the chain carries N6-(pyridoxal phosphate)lysine. Position 239–240 (239–240 (NT)) interacts with pyridoxal 5'-phosphate.

This sequence belongs to the class-V pyridoxal-phosphate-dependent aminotransferase family. SerC subfamily. As to quaternary structure, homodimer. It depends on pyridoxal 5'-phosphate as a cofactor.

It localises to the cytoplasm. It carries out the reaction O-phospho-L-serine + 2-oxoglutarate = 3-phosphooxypyruvate + L-glutamate. The enzyme catalyses 4-(phosphooxy)-L-threonine + 2-oxoglutarate = (R)-3-hydroxy-2-oxo-4-phosphooxybutanoate + L-glutamate. It participates in amino-acid biosynthesis; L-serine biosynthesis; L-serine from 3-phospho-D-glycerate: step 2/3. It functions in the pathway cofactor biosynthesis; pyridoxine 5'-phosphate biosynthesis; pyridoxine 5'-phosphate from D-erythrose 4-phosphate: step 3/5. Functionally, catalyzes the reversible conversion of 3-phosphohydroxypyruvate to phosphoserine and of 3-hydroxy-2-oxo-4-phosphonooxybutanoate to phosphohydroxythreonine. The sequence is that of Phosphoserine aminotransferase from Escherichia coli O17:K52:H18 (strain UMN026 / ExPEC).